A 397-amino-acid chain; its full sequence is Class V chitinase CHIT5 (397 aa).

An N-terminal signal peptide occupies residues methionine 1–alanine 18. One can recognise a GH18 domain in the interval glycine 54–tyrosine 397. N-linked (GlcNAc...) asparagine glycosylation is found at asparagine 128 and asparagine 147. Glutamate 166 serves as the catalytic Proton donor. Residues asparagine 193, asparagine 209, asparagine 247, and asparagine 261 are each glycosylated (N-linked (GlcNAc...) asparagine).

The protein belongs to the glycosyl hydrolase 18 family. Chitinase class V subfamily.

It carries out the reaction Random endo-hydrolysis of N-acetyl-beta-D-glucosaminide (1-&gt;4)-beta-linkages in chitin and chitodextrins.. It functions in the pathway glycan degradation; chitin degradation. In terms of biological role, possesses chitinase activity in vitro toward glycol chitin, carboxymethyl-chitin, colloidal chitin, and the chitin oligosaccharides (N-acetylglucosamine) (GlcNAc)6 and (GlcNAc)5. Hydrolyzes (GlcNAc)6 into (GlcNAc)4 and (GlcNAc)2, or two (GlcNAc)3 molecules. Has the capacity to inhibit hyphal growth of the fungus Trichoderma viride in an agar-plate bioassay. Involved in symbiotic signaling. Required for root hair infection threads (ITs) elongation and nodule development. Possesses Nod factor (NF) hydrolase activity. NFs are lipo-chitooligosaccharide signaling molecules produced by nitrogen-fixing rhizobia to initiate nodulation (symbiosis) on the roots of legumes. Modulates NF levels and signaling to complete transition of infected nodules to functional nitrogen-fixing organs. This is Class V chitinase CHIT5 from Lotus japonicus (Lotus corniculatus var. japonicus).